Consider the following 491-residue polypeptide: MSKLRFFQSLLISTVICFFLPSINARGGHSDHIHPGDGNYSFHGIVRHLFAQEEPTPSLELTRGYMTNDDLEKAMKDFTKRCSKISRLYSIGKSVNGFPLWVIEISDRPGEIEAEPAFKYIGNVHGDEPVGRELLLRLANWICDNYKKDPLAQMIVENVHLHIMPSLNPDGFSIRKRNNANNVDLNRDFPDQFFPFNDDLNLRQPETKAIMTWLRDIRFTASATLHGGALVANFPWDGTEDKRKYYYACPDDETFRFLARIYSKSHRNMSLSKEFEEGITNGASWYPIYGGMQDWNYIYGGCFELTLEISDNKWPKASELSTIWDYNRKSMLNLVASLVKTGVHGRIFSLDKGKPLPGLVVVKGINYTVKAHQTYADYHRLLVPGQKYEVTASSPGYKSKTTTVWLGENAVTADFILIPETSSRGNQLRSSCDCSCKSCGQPLLTQFFTETNNGITLTLFVVVVFLCFLLQRRVRFNLWKQRQSSRRSITV.

The first 25 residues, M1–A25, serve as a signal peptide directing secretion. Over R26–N452 the chain is Extracellular. N39 carries an N-linked (GlcNAc...) asparagine glycan. In terms of domain architecture, Peptidase M14 spans G64–L338. Zn(2+) contacts are provided by H125 and E128. Residues H125–E128 and N186–R187 contribute to the substrate site. H226 serves as a coordination point for Zn(2+). A glycan (N-linked (GlcNAc...) asparagine) is linked at N268. Residue Y286 participates in substrate binding. E308 serves as the catalytic Proton donor/acceptor. A helical transmembrane segment spans residues N453–L470. The Cytoplasmic segment spans residues Q471–V491.

Belongs to the peptidase M14 family. Requires Zn(2+) as cofactor. Expressed in roots, shoots, leaves, flowers and siliques.

The protein resides in the endosome membrane. In terms of biological role, possesses in vitro carboxypeptidase activity against the C-terminal arginine and lysine residues. Involved in the maturation of CLE19. Removes the C-terminal arginine residue of CLE19 proprotein. The cleavage of the C-terminal arginine residue is necessary for CLE19 activity in vivo. Is not involved in generating active CLV3. Is not involved in CLE19 or CLV3 perception. This Arabidopsis thaliana (Mouse-ear cress) protein is Carboxypeptidase SOL1.